The following is a 454-amino-acid chain: Protein pid-2 (454 aa).

The disordered stretch occupies residues 31–61; it reads VQNNQKEHPPVQEIKTVSSKSKEHRVSSSRK. Positions 50 to 61 are enriched in basic and acidic residues; sequence KSKEHRVSSSRK.

May interact with pid-4, pid-5, app-1 and prmt-5. Expressed throughout the mitotic and meiotic regions of the germline and in oocytes.

It is found in the cytoplasm. It localises to the perinuclear region. The protein localises to the cytoplasmic granule. Its function is as follows. Involved in gene silencing mediated by a class of 21 nucleotide PIWI-interacting RNAs (piRNAs) that possess a uracil residue at the 5'-end (also called 21U-RNAs) and that guide the Piwi protein prg-1 to its DNA targets for silencing. Not required for the biogenesis of 21U-RNAs. May also be involved in gene silencing mediated by 22G-siRNAs (a class of 22 nucleotide endogenous small interfering RNAs (siRNAs) that possess a triphosphorylated guanine residue at the 5'-end) and 26G-siRNAs (a class of 26 nucleotide siRNAs that possess a guanine residue at the 5'-end). Required for the biogenesis of secondary and tertiary 22G-siRNAs from many loci. Specifically, promotes the production of 22G-siRNAs from the 5' end of target mRNAs. May play a role in the production of 26G-siRNAs. Plays a role in small RNA-directed transgenerational epigenetic inheritance (also called RNAe) over several generations and germline immortality. Together with the argonaut protein hrde-1, promotes the silencing of the DNA transposable element Tc1. Required for the formation of liquid-like condensates in the cytoplasm called Z granules, playing a role in maintaining their assembly, viscosity and morphology in adult germ cells, and localization in early embryos. In Caenorhabditis elegans, this protein is Protein pid-2.